The sequence spans 201 residues: Snake venom metalloproteinase trimerelysin-2 (201 aa).

Gln1 is modified (pyrrolidone carboxylic acid). Residues 6–201 (RYIELAIVVD…YNPQCILNAP (196 aa)) form the Peptidase M12B domain. Asn72 is a glycosylation site (N-linked (GlcNAc...) asparagine). Intrachain disulfides connect Cys117–Cys196, Cys158–Cys180, and Cys160–Cys163. His142 lines the Zn(2+) pocket. Glu143 is an active-site residue. 2 residues coordinate Zn(2+): His146 and His152.

It belongs to the venom metalloproteinase (M12B) family. P-I subfamily. In terms of assembly, monomer. The cofactor is Zn(2+). Expressed by the venom gland.

The protein localises to the secreted. The enzyme catalyses Cleavage of 3-Asn-|-Gln-4, 10-His-|-Leu-11 and 14-Ala-|-Leu-15 in the insulin B chain, and the bond Z-Gly-Pro-|-Leu-Gly-Pro in a small molecule substrate of microbial collagenase.. Functionally, major venom non-hemorrhagic metalloproteinase. The polypeptide is Snake venom metalloproteinase trimerelysin-2 (Protobothrops flavoviridis (Habu)).